A 396-amino-acid polypeptide reads, in one-letter code: Phosphoglycerate kinase (396 aa).

Substrate-binding positions include 24–26 (DFN), arginine 39, 62–65 (HLGR), arginine 120, and arginine 153. ATP-binding positions include lysine 203, glycine 294, glutamate 325, and 352–355 (GGDS).

This sequence belongs to the phosphoglycerate kinase family. In terms of assembly, monomer.

It localises to the cytoplasm. It catalyses the reaction (2R)-3-phosphoglycerate + ATP = (2R)-3-phospho-glyceroyl phosphate + ADP. It participates in carbohydrate degradation; glycolysis; pyruvate from D-glyceraldehyde 3-phosphate: step 2/5. This chain is Phosphoglycerate kinase, found in Dictyoglomus turgidum (strain DSM 6724 / Z-1310).